Here is a 267-residue protein sequence, read N- to C-terminus: Type III pantothenate kinase (267 aa).

6 to 13 provides a ligand contact to ATP; sequence DSGNSRLK. Residues Tyr96 and 103–106 each bind substrate; that span reads GADR. Residue Asp105 is the Proton acceptor of the active site. Position 131 (Thr131) interacts with ATP. Residue Thr181 coordinates substrate.

The protein belongs to the type III pantothenate kinase family. In terms of assembly, homodimer. It depends on NH4(+) as a cofactor. The cofactor is K(+).

The protein resides in the cytoplasm. It carries out the reaction (R)-pantothenate + ATP = (R)-4'-phosphopantothenate + ADP + H(+). It functions in the pathway cofactor biosynthesis; coenzyme A biosynthesis; CoA from (R)-pantothenate: step 1/5. In terms of biological role, catalyzes the phosphorylation of pantothenate (Pan), the first step in CoA biosynthesis. Functionally, activates transcription of the pertussis toxin operon in a BvgAS-dependent manner. May interact with the alpha subunit of RNA polymerase. The chain is Type III pantothenate kinase (coaX) from Bordetella pertussis (strain Tohama I / ATCC BAA-589 / NCTC 13251).